Reading from the N-terminus, the 119-residue chain is Ribonuclease P protein component (119 aa).

It belongs to the RnpA family. Consists of a catalytic RNA component (M1 or rnpB) and a protein subunit.

The catalysed reaction is Endonucleolytic cleavage of RNA, removing 5'-extranucleotides from tRNA precursor.. RNaseP catalyzes the removal of the 5'-leader sequence from pre-tRNA to produce the mature 5'-terminus. It can also cleave other RNA substrates such as 4.5S RNA. The protein component plays an auxiliary but essential role in vivo by binding to the 5'-leader sequence and broadening the substrate specificity of the ribozyme. The polypeptide is Ribonuclease P protein component (Streptococcus pyogenes serotype M5 (strain Manfredo)).